The primary structure comprises 568 residues: Proline--tRNA ligase (568 aa).

It belongs to the class-II aminoacyl-tRNA synthetase family. ProS type 1 subfamily. As to quaternary structure, homodimer.

It localises to the cytoplasm. The catalysed reaction is tRNA(Pro) + L-proline + ATP = L-prolyl-tRNA(Pro) + AMP + diphosphate. Its function is as follows. Catalyzes the attachment of proline to tRNA(Pro) in a two-step reaction: proline is first activated by ATP to form Pro-AMP and then transferred to the acceptor end of tRNA(Pro). As ProRS can inadvertently accommodate and process non-cognate amino acids such as alanine and cysteine, to avoid such errors it has two additional distinct editing activities against alanine. One activity is designated as 'pretransfer' editing and involves the tRNA(Pro)-independent hydrolysis of activated Ala-AMP. The other activity is designated 'posttransfer' editing and involves deacylation of mischarged Ala-tRNA(Pro). The misacylated Cys-tRNA(Pro) is not edited by ProRS. This is Proline--tRNA ligase from Halothermothrix orenii (strain H 168 / OCM 544 / DSM 9562).